A 90-amino-acid polypeptide reads, in one-letter code: Small ribosomal subunit protein uS15 (90 aa).

This sequence belongs to the universal ribosomal protein uS15 family. Part of the 30S ribosomal subunit. Forms a bridge to the 50S subunit in the 70S ribosome, contacting the 23S rRNA.

In terms of biological role, one of the primary rRNA binding proteins, it binds directly to 16S rRNA where it helps nucleate assembly of the platform of the 30S subunit by binding and bridging several RNA helices of the 16S rRNA. Its function is as follows. Forms an intersubunit bridge (bridge B4) with the 23S rRNA of the 50S subunit in the ribosome. The protein is Small ribosomal subunit protein uS15 of Campylobacter fetus subsp. fetus (strain 82-40).